A 362-amino-acid chain; its full sequence is 3-dehydroquinate synthase (362 aa).

NAD(+) is bound by residues 71 to 76 (DGEQYK), 105 to 109 (GVVGD), 129 to 130 (TT), Lys-142, Lys-151, and 169 to 172 (CLKT). Zn(2+) contacts are provided by Glu-184, His-247, and His-264.

It belongs to the sugar phosphate cyclases superfamily. Dehydroquinate synthase family. NAD(+) serves as cofactor. Requires Co(2+) as cofactor. The cofactor is Zn(2+).

The protein resides in the cytoplasm. It catalyses the reaction 7-phospho-2-dehydro-3-deoxy-D-arabino-heptonate = 3-dehydroquinate + phosphate. The protein operates within metabolic intermediate biosynthesis; chorismate biosynthesis; chorismate from D-erythrose 4-phosphate and phosphoenolpyruvate: step 2/7. Catalyzes the conversion of 3-deoxy-D-arabino-heptulosonate 7-phosphate (DAHP) to dehydroquinate (DHQ). This Escherichia coli O157:H7 protein is 3-dehydroquinate synthase.